Here is a 118-residue protein sequence, read N- to C-terminus: Transcription factor PAR1 (118 aa).

A disordered region spans residues methionine 1 to glutamate 58. Positions arginine 13–valine 23 are enriched in polar residues. Residues alanine 43–leucine 92 form the bHLH domain.

It belongs to the bHLH protein family. In terms of assembly, homodimer.

It localises to the nucleus. In terms of biological role, atypical bHLH transcription factor that acts as a negative regulator of a variety of shade avoidance syndrome (SAS) responses, including seedling elongation and photosynthetic pigment accumulation. Acts as a direct transcriptional repressor of two auxin-responsive genes, SAUR15 and SAUR68. May function in integrating shade and hormone transcriptional networks in response to light and auxin changes. The polypeptide is Transcription factor PAR1 (PAR1) (Arabidopsis thaliana (Mouse-ear cress)).